The primary structure comprises 112 residues: Cuticle protein AM1239 (112 aa).

The Chitin-binding type R&amp;R domain maps to 16-85; it reads DGNFNYRFET…FIPTDHPLPA (70 aa). Residue threonine 79 is glycosylated (O-linked (HexNAc) threonine).

In terms of tissue distribution, arthrodial membrane.

This Cancer pagurus (Rock crab) protein is Cuticle protein AM1239.